A 78-amino-acid chain; its full sequence is Defensin-like protein 287 (78 aa).

The signal sequence occupies residues 1-24; sequence MNNLRVIMSVLLAVLVFTATVSES. Disulfide bonds link cysteine 39–cysteine 59, cysteine 45–cysteine 64, and cysteine 51–cysteine 66.

This sequence belongs to the DEFL family.

It localises to the secreted. In Arabidopsis thaliana (Mouse-ear cress), this protein is Defensin-like protein 287.